The following is a 325-amino-acid chain: Fructose-1,6-bisphosphatase class 1 (325 aa).

4 residues coordinate Mg(2+): E84, D103, L105, and D106. Substrate is bound by residues 106–109, N196, and K262; that span reads DGSS. E268 contacts Mg(2+).

The protein belongs to the FBPase class 1 family. As to quaternary structure, homotetramer. Mg(2+) is required as a cofactor.

The protein localises to the cytoplasm. The enzyme catalyses beta-D-fructose 1,6-bisphosphate + H2O = beta-D-fructose 6-phosphate + phosphate. It functions in the pathway carbohydrate biosynthesis; gluconeogenesis. This Shewanella oneidensis (strain ATCC 700550 / JCM 31522 / CIP 106686 / LMG 19005 / NCIMB 14063 / MR-1) protein is Fructose-1,6-bisphosphatase class 1.